Consider the following 89-residue polypeptide: Small ribosomal subunit protein uS14A (89 aa).

The protein belongs to the universal ribosomal protein uS14 family. In terms of assembly, part of the 30S ribosomal subunit. Contacts proteins S3 and S10.

Its function is as follows. Binds 16S rRNA, required for the assembly of 30S particles and may also be responsible for determining the conformation of the 16S rRNA at the A site. In Levilactobacillus brevis (strain ATCC 367 / BCRC 12310 / CIP 105137 / JCM 1170 / LMG 11437 / NCIMB 947 / NCTC 947) (Lactobacillus brevis), this protein is Small ribosomal subunit protein uS14A.